The following is a 122-amino-acid chain: Large ribosomal subunit protein uL18 (122 aa).

The disordered stretch occupies residues 1–26; it reads MSNLSRKQQTQKRHRRLRRHLKGTAQ. The span at 9–22 shows a compositional bias: basic residues; sequence QTQKRHRRLRRHLK.

The protein belongs to the universal ribosomal protein uL18 family. In terms of assembly, part of the 50S ribosomal subunit; part of the 5S rRNA/L5/L18/L25 subcomplex. Contacts the 5S and 23S rRNAs.

Its function is as follows. This is one of the proteins that bind and probably mediate the attachment of the 5S RNA into the large ribosomal subunit, where it forms part of the central protuberance. The protein is Large ribosomal subunit protein uL18 of Prochlorococcus marinus (strain MIT 9313).